The following is a 31-amino-acid chain: Cyclotide mden-M (31 aa).

Positions 1–31 form a cross-link, cyclopeptide (Gly-Asn); that stretch reads GTIPCGESCVYIPCITSALGCSCKKKVCYKN. Disulfide bonds link cysteine 5/cysteine 21, cysteine 9/cysteine 23, and cysteine 14/cysteine 28.

Belongs to the cyclotide family. Bracelet subfamily. This is a cyclic peptide.

In terms of biological role, probably participates in a plant defense mechanism. This Melicytus dentatus (Tree violet) protein is Cyclotide mden-M.